The sequence spans 1405 residues: DNA-directed RNA polymerase subunit beta' (1405 aa).

Zn(2+)-binding residues include Cys71, Cys73, Cys86, and Cys89. The Mg(2+) site is built by Asp462, Asp464, and Asp466. Residues Cys810, Cys884, Cys891, and Cys894 each contribute to the Zn(2+) site.

The protein belongs to the RNA polymerase beta' chain family. The RNAP catalytic core consists of 2 alpha, 1 beta, 1 beta' and 1 omega subunit. When a sigma factor is associated with the core the holoenzyme is formed, which can initiate transcription. Requires Mg(2+) as cofactor. It depends on Zn(2+) as a cofactor.

The enzyme catalyses RNA(n) + a ribonucleoside 5'-triphosphate = RNA(n+1) + diphosphate. DNA-dependent RNA polymerase catalyzes the transcription of DNA into RNA using the four ribonucleoside triphosphates as substrates. The chain is DNA-directed RNA polymerase subunit beta' from Maricaulis maris (strain MCS10) (Caulobacter maris).